A 218-amino-acid polypeptide reads, in one-letter code: Protein N-lysine methyltransferase METTL21A (218 aa).

S-adenosyl-L-methionine is bound by residues W47, 73 to 75 (GAG), D94, W125, and A143.

The protein belongs to the methyltransferase superfamily. METTL21 family. In terms of assembly, interacts with heat shock 70 family members; at least some of these proteins are methylation substrates.

The protein resides in the cytoplasm. It catalyses the reaction L-lysyl-[protein] + 3 S-adenosyl-L-methionine = N(6),N(6),N(6)-trimethyl-L-lysyl-[protein] + 3 S-adenosyl-L-homocysteine + 3 H(+). Functionally, protein-lysine methyltransferase that selectively trimethylates residues in heat shock protein 70 (HSP70) family members. Contributes to the in vivo trimethylation of Lys residues in HSPA1 and HSPA8. In vitro methylates 'Lys-561' in HSPA1, 'Lys-564' in HSPA2, 'Lys-585' in HSPA5, 'Lys-563' in HSPA6 and 'Lys-561' in HSPA8. This Mus musculus (Mouse) protein is Protein N-lysine methyltransferase METTL21A (Mettl21A).